The following is a 250-amino-acid chain: MTALLSPDQLEADLRAIGARLYHDQHPFHALLHHGKLDRGQVQAWALNRFEYQRCIPLKDAAILARMEDPALRRIWRQRILDHDGNSASDGGIARWLHLTDALGLDRTLVESGRALLPGTRFAVQAYLHFVREKSLLEAIASSLTELFAPNIIGQRVAGMLKHYDFVSSEALAYFEHRLTEAPRDSDFALDYVKQHADTVEKQALVKAALHFKCSVLWAQLDALHVAYVTPGIVWPDAFVPDRDASRVAA.

This sequence belongs to the PqqC family.

The catalysed reaction is 6-(2-amino-2-carboxyethyl)-7,8-dioxo-1,2,3,4,7,8-hexahydroquinoline-2,4-dicarboxylate + 3 O2 = pyrroloquinoline quinone + 2 H2O2 + 2 H2O + H(+). The protein operates within cofactor biosynthesis; pyrroloquinoline quinone biosynthesis. Functionally, ring cyclization and eight-electron oxidation of 3a-(2-amino-2-carboxyethyl)-4,5-dioxo-4,5,6,7,8,9-hexahydroquinoline-7,9-dicarboxylic-acid to PQQ. In Xanthomonas euvesicatoria pv. vesicatoria (strain 85-10) (Xanthomonas campestris pv. vesicatoria), this protein is Pyrroloquinoline-quinone synthase.